The chain runs to 372 residues: Delta-type opioid receptor (372 aa).

The Extracellular segment spans residues 1 to 47 (MEPVPSARAELQFSLLANVSDTFPSAFPSASANASGSPGARSASSLA). Asn18 and Asn33 each carry an N-linked (GlcNAc...) asparagine glycan. The helical transmembrane segment at 48 to 75 (LAIAITALYSAVCAVGLLGNVLVMFGIV) threads the bilayer. Residues 76–85 (RYTKLKTATN) are Cytoplasmic-facing. A helical transmembrane segment spans residues 86-110 (IYIFNLALADALATSTLPFQSAKYL). Residues 111-122 (METWPFGELLCK) are Extracellular-facing. A disulfide bridge connects residues Cys121 and Cys198. The chain crosses the membrane as a helical span at residues 123–144 (AVLSIDYYNMFTSIFTLTMMSV). Residues 145–163 (DRYIAVCHPVKALDFRTPA) are Cytoplasmic-facing. Residues 164-186 (KAKLINICIWVLASGVGVPIMVM) traverse the membrane as a helical segment. Topologically, residues 187 to 206 (AVTQPRDGAVVCTLQFPSPS) are extracellular. Residues 207–238 (WYWDTVTKICVFLFAFVVPILIITVCYGLMLL) traverse the membrane as a helical segment. The Cytoplasmic portion of the chain corresponds to 239–261 (RLRSVRLLSGSKEKDRSLRRITR). A helical membrane pass occupies residues 262-284 (MVLVVVGAFVVCWAPIHIFVIVW). Over 285–299 (TLVDINRRDPLVVAA) the chain is Extracellular. Residues 300 to 321 (LHLCIALGYANSSLNPVLYAFL) traverse the membrane as a helical segment. Residues 322 to 372 (DENFKRCFRQLCRAPCGGQEPGSLRRPRQATARERVTACTPSDGPGGGAAA) lie on the Cytoplasmic side of the membrane. Cys333 carries the S-palmitoyl cysteine lipid modification. A disordered region spans residues 340-372 (QEPGSLRRPRQATARERVTACTPSDGPGGGAAA).

The protein belongs to the G-protein coupled receptor 1 family. In terms of assembly, may form homooligomers. Forms a heterodimer with OPRM1. Interacts with GPRASP1. Interacts with RTP4; the interaction promotes cell surface localization of the OPRD1-OPRM1 heterodimer. Ubiquitinated. A basal ubiquitination seems not to be related to degradation. Ubiquitination is increased upon formation of OPRM1:OPRD1 oligomers leading to proteasomal degradation; the ubiquitination is diminished by RTP4. In terms of tissue distribution, detected in brain, brain stem and brain cortex.

It localises to the cell membrane. In terms of biological role, G-protein coupled receptor that functions as a receptor for endogenous enkephalins and for a subset of other opioids. Ligand binding causes a conformation change that triggers signaling via guanine nucleotide-binding proteins (G proteins) and modulates the activity of down-stream effectors, such as adenylate cyclase. Signaling leads to the inhibition of adenylate cyclase activity. Inhibits neurotransmitter release by reducing calcium ion currents and increasing potassium ion conductance. Plays a role in the perception of pain and in opiate-mediated analgesia. Plays a role in developing analgesic tolerance to morphine. This Rattus norvegicus (Rat) protein is Delta-type opioid receptor (Oprd1).